The following is a 169-amino-acid chain: uncharacterized protein (169 aa).

The chain crosses the membrane as a helical span at residues 55–77 (SLFIFKAVMILHTCLIVKSIRIF).

It is found in the membrane. This is an uncharacterized protein from Saccharomyces cerevisiae (strain ATCC 204508 / S288c) (Baker's yeast).